We begin with the raw amino-acid sequence, 93 residues long: Non-histone chromosomal protein 6A (93 aa).

Disordered stretches follow at residues 1–23 and 69–93; these read MVTPREPKKRTTRKKKDPNAPKR and PYEAKAQADKKRYESEKELYNATLA. Basic residues predominate over residues 7–16; the sequence is PKKRTTRKKK. Residues 21–89 constitute a DNA-binding region (HMG box); it reads PKRALSAYMF…RYESEKELYN (69 aa). Positions 69–87 are enriched in basic and acidic residues; it reads PYEAKAQADKKRYESEKEL.

The protein belongs to the NHP6 family. In terms of assembly, weakly associates with the stable SPT16-POB3 heterodimer to form the FACT (yFACT or SNP) complex, which is associated with nucleosomes. Multiple molecules of NHP6 (NHP6A and/or NHP6B) are required to recruit the SPT16-POB3 heterodimer to DNA.

The protein localises to the nucleus. Its subcellular location is the chromosome. DNA-binding protein that induces severe bending of DNA. Required for DNA-binding by the FACT complex, a general chromatin factor that acts to reorganize nucleosomes. The FACT complex is involved in multiple processes that require DNA as a template such as mRNA elongation, DNA replication and DNA repair. Also augments the fidelity of transcription by RNA polymerase III independently of any role in the FACT complex. Required for transcriptional initiation fidelity of some but not all tRNA genes. Seems to be functionally redundant with NHP6B. The sequence is that of Non-histone chromosomal protein 6A (NHP6A) from Saccharomyces cerevisiae (strain ATCC 204508 / S288c) (Baker's yeast).